We begin with the raw amino-acid sequence, 338 residues long: Glycerol-3-phosphate dehydrogenase [NAD(P)+] (338 aa).

Residues Ser14, Tyr15, His35, and Lys109 each coordinate NADPH. 3 residues coordinate sn-glycerol 3-phosphate: Lys109, Gly138, and Thr140. Ala142 contacts NADPH. Sn-glycerol 3-phosphate is bound by residues Lys194, Asp247, Ser257, Arg258, and Asn259. Catalysis depends on Lys194, which acts as the Proton acceptor. Arg258 is an NADPH binding site. NADPH-binding residues include Val282 and Glu284.

Belongs to the NAD-dependent glycerol-3-phosphate dehydrogenase family.

Its subcellular location is the cytoplasm. It catalyses the reaction sn-glycerol 3-phosphate + NAD(+) = dihydroxyacetone phosphate + NADH + H(+). The enzyme catalyses sn-glycerol 3-phosphate + NADP(+) = dihydroxyacetone phosphate + NADPH + H(+). Its pathway is membrane lipid metabolism; glycerophospholipid metabolism. Catalyzes the reduction of the glycolytic intermediate dihydroxyacetone phosphate (DHAP) to sn-glycerol 3-phosphate (G3P), the key precursor for phospholipid synthesis. In Shewanella baltica (strain OS185), this protein is Glycerol-3-phosphate dehydrogenase [NAD(P)+].